Here is a 166-residue protein sequence, read N- to C-terminus: Lipoprotein signal peptidase (166 aa).

3 consecutive transmembrane segments (helical) span residues 12 to 32 (WLWL…LILQ), 70 to 90 (WFFA…MYRS), and 102 to 122 (ALII…GFVV). Active-site residues include Asp123 and Asp141. The helical transmembrane segment at 137–157 (FNLADSAICIGAALIVLEGFL) threads the bilayer.

Belongs to the peptidase A8 family.

The protein localises to the cell inner membrane. The catalysed reaction is Release of signal peptides from bacterial membrane prolipoproteins. Hydrolyzes -Xaa-Yaa-Zaa-|-(S,diacylglyceryl)Cys-, in which Xaa is hydrophobic (preferably Leu), and Yaa (Ala or Ser) and Zaa (Gly or Ala) have small, neutral side chains.. It participates in protein modification; lipoprotein biosynthesis (signal peptide cleavage). Functionally, this protein specifically catalyzes the removal of signal peptides from prolipoproteins. This is Lipoprotein signal peptidase from Salmonella agona (strain SL483).